Consider the following 359-residue polypeptide: MNILTPVAERLPSREEAEEALAVLRRWATHTPASDVAALAPEAPALVYPELSRSYPRAFTVDEAYKASLPDLQNGPASLIVGAKAVIQHVGISNFRLPIRYHTRDNGDLQLETSVTGTVSLEAEKKGINMSRIMRSFYAHAEQAFSFEVIERALEDYKRDLESFDARIQMRFSFPVKVPSLRSGLTGWQYYDIALELVDRGGVRKEIMHLDFVYSSTCPCSLELSEHARRERGQLATPHSQRSVARISVEVRQGKCLWFEDLLDLVRSAVPTETQVMVKREDEQAFAELNAANPIFVEDAARSFCQALQSDPRIGDFRVVASHQESLHSHDAVSVLTEGPTFAAESLDPRLFSSLYHVG.

It belongs to the GTP cyclohydrolase IV family.

It carries out the reaction GTP + H2O = 7,8-dihydroneopterin 3'-triphosphate + formate + H(+). The protein operates within cofactor biosynthesis; 7,8-dihydroneopterin triphosphate biosynthesis; 7,8-dihydroneopterin triphosphate from GTP: step 1/1. Functionally, converts GTP to 7,8-dihydroneopterin triphosphate. The sequence is that of GTP cyclohydrolase FolE2 from Cereibacter sphaeroides (strain KD131 / KCTC 12085) (Rhodobacter sphaeroides).